A 104-amino-acid chain; its full sequence is Urease subunit beta (104 aa).

The protein belongs to the urease beta subunit family. In terms of assembly, heterotrimer of UreA (gamma), UreB (beta) and UreC (alpha) subunits. Three heterotrimers associate to form the active enzyme.

It localises to the cytoplasm. The enzyme catalyses urea + 2 H2O + H(+) = hydrogencarbonate + 2 NH4(+). The protein operates within nitrogen metabolism; urea degradation; CO(2) and NH(3) from urea (urease route): step 1/1. The protein is Urease subunit beta of Rhodococcus opacus (strain B4).